Here is a 91-residue protein sequence, read N- to C-terminus: MLQYRIIVDGRVQGVGFRYFVQMEADKRKLAGWVKNRDDGRVEILAEGPENALQSFVEAVKNGSPFSKVTDISVTESRSLEGHHRFSIVYS.

Residues 3–90 (QYRIIVDGRV…EGHHRFSIVY (88 aa)) enclose the Acylphosphatase-like domain. Residues Arg-18 and Asn-36 contribute to the active site.

The protein belongs to the acylphosphatase family.

The enzyme catalyses an acyl phosphate + H2O = a carboxylate + phosphate + H(+). The chain is Acylphosphatase (acyP) from Bacillus subtilis (strain 168).